Here is a 1101-residue protein sequence, read N- to C-terminus: MDECGSRIRRRVSLPKRNRPSLGCIFGAPTAAELVPGDEGKEEEEMVAENRRRKTAGVLPVEVQPLLLSDSPECLVLGGGDTNPDLLRHMPTDRGVGDQPNDSEVDMFGDYDSFTENSFIAQVDDLEQKYMQLPEHKKHATDFATENLCSESIKNKLSITTIGNLTELQTDKHTENQSGYEGVTIEPGADLLYDVPSSQAIYFENLQNSSNDLGDHSMKERDWKSSSHNTVNEELPHNCIEQPQQNDESSSKVRTSSDMNRRKSIKDHLKNAMTGNAKAQTPIFSRSKQLKDTLLSEEINVAKKTVESSSNDLGPFYSLPSKVRDLYAQFKGIEKLYEWQHTCLTLNSVQERKNLIYSLPTSGGKTLVAEILMLQELLCCRKDVLMILPYVAIVQEKISGLSSFGIELGFFVEEYAGSKGRFPPTKRREKKSLYIATIEKGHSLVNSLIETGRIDSLGLVVVDELHMIGEGSRGATLEMTLAKILYTSKTTQIIGMSATLNNVEDLQKFLQAEYYTSQFRPVELKEYLKINDTIYEVDSKAENGMTFSRLLNYKYSDTLKKMDPDHLVALVTEVIPNYSCLVFCPSKKNCENVAEMICKFLSKEYLKHKEKEKCEVIKNLKNIGNGNLCPVLKRTIPFGVAYHHSGLTSDERKLLEEAYSTGVLCLFTCTSTLAAGVNLPARRVILRAPYVAKEFLKRNQYKQMIGRAGRAGIDTIGESILILQEKDKQQVLELITKPLENCYSHLVQEFTKGIQTLFLSLIGLKIATNLDDIYHFMNGTFFGVQQKVLLKEKSLWEITVESLRYLTEKGLLQKDTIYKSEEEVQYNFHITKLGRASFKGTIDLAYCDILYRDLKKGLEGLVLESLLHLIYLTTPYDLVSQCNPDWMIYFRQFSQLSPAEQNVAAILGVSESFIGKKASGQAIGKKVDKNVVNRLYLSFVLYTLLKETNIWTVSEKFNMPRGYIQNLLTGTASFSSCVLHFCEELEEFWVYRALLVELTKKLTYCVKAELIPLMEVTGVLEGRAKQLYSAGYKSLMHLANANPEVLVRTIDHLSRRQAKQIVSSAKMLLHEKAEALQEEVEELLRLPSDFPGAVASSTDKA.

The interval 212–261 (DLGDHSMKERDWKSSSHNTVNEELPHNCIEQPQQNDESSSKVRTSSDMNR) is disordered. Positions 213–225 (LGDHSMKERDWKS) are enriched in basic and acidic residues. Positions 241–258 (EQPQQNDESSSKVRTSSD) are enriched in polar residues. The region spanning 346-518 (LNSVQERKNL…FLQAEYYTSQ (173 aa)) is the Helicase ATP-binding domain. 359 to 366 (LPTSGGKT) provides a ligand contact to ATP. The DEAH box motif lies at 463 to 466 (DELH). The 193-residue stretch at 566–758 (HLVALVTEVI…EFTKGIQTLF (193 aa)) folds into the Helicase C-terminal domain.

It belongs to the helicase family. SKI2 subfamily. As to quaternary structure, homodimer. Interacts with POLN. Interacts with RAD51B and RAD51C; promoting association with the BCDX2 complex. Interacts with the replication protein A (RPA/RP-A) complex. Interacts with RAD51; stimulating HELQ DNA helicase activity and ability to unwing DNA.

The protein resides in the nucleus. The protein localises to the chromosome. It catalyses the reaction Couples ATP hydrolysis with the unwinding of duplex DNA by translocating in the 3'-5' direction.. The catalysed reaction is ATP + H2O = ADP + phosphate + H(+). Its activity is regulated as follows. ATPase activity is strongly stimulated by single-stranded DNA. Presence of ATP and Mg cofactor are required for helicase activity allowing to unwind duplex oligonucleotides up to 60-70-mer. This helicase activity is stimulated by replication protein A (RPA/RP-A) complex that binds to unwound regions and inhibits re-annealing. Functionally, single-stranded 3'-5' DNA helicase that plays a key role in homology-driven double-strand break (DSB) repair. Involved in different DSB repair mechanisms that are guided by annealing of extensive stretches of complementary bases at break ends, such as microhomology-mediated end-joining (MMEJ), single-strand annealing (SSA) or synthesis-dependent strand annealing (SDSA). Possesses both DNA unwinding and annealing activities. Forms a complex with RAD51, stimulating HELQ DNA helicase activity and ability to unwing DNA. Efficiently unwinds substrates containing 3' overhangs or a D-loop. In contrast, interaction with the replication protein A (RPA/RP-A) complex inhibits DNA unwinding by HELQ but strongly stimulates DNA strand annealing. Triggers displacement of RPA from single-stranded DNA to facilitate annealing of complementary sequences. The chain is Helicase POLQ-like from Homo sapiens (Human).